The sequence spans 301 residues: Mitochondrial ornithine transporter 1 (301 aa).

6 helical membrane-spanning segments follow: residues 5–25, 68–88, 110–130, 168–188, 207–227, and 237–257; these read PAIQ…ACVL, SPAL…YGFC, AAAG…TELV, GFYH…FFFF, LGPI…WLAV, and IQVL…LSIV. 3 Solcar repeats span residues 7–91, 104–197, and 207–293; these read IQAA…CQQV, LSDL…SRSF, and LGPI…SRKL.

This sequence belongs to the mitochondrial carrier (TC 2.A.29) family. In terms of tissue distribution, expressed in the liver (at protein level).

Its subcellular location is the mitochondrion inner membrane. It is found in the mitochondrion membrane. It carries out the reaction L-citrulline(in) + L-ornithine(out) + H(+)(in) = L-citrulline(out) + L-ornithine(in) + H(+)(out). The enzyme catalyses L-ornithine(in) + L-arginine(out) = L-ornithine(out) + L-arginine(in). The catalysed reaction is L-ornithine(out) + L-lysine(in) = L-ornithine(in) + L-lysine(out). It catalyses the reaction L-ornithine(out) + H(+)(in) = L-ornithine(in) + H(+)(out). It carries out the reaction L-lysine(out) + H(+)(in) = L-lysine(in) + H(+)(out). With respect to regulation, inhibited by pyridoxal 5'-phosphate as well as by mercurials (mersalyl, p-chloromercuribenzene sulfonate, and mercuric chloride), N-ethylmaleimide and spermine. Functionally, mitochondrial ornithine-citrulline antiporter. Catalyzes the exchange between cytosolic ornithine and mitochondrial citrulline plus an H(+), the proton compensates the positive charge of ornithine thus leading to an electroneutral transport. Plays a crucial role in the urea cycle, by connecting the cytosolic and the intramitochondrial reactions of the urea cycle. Lysine and arginine are also transported by the antiport mechanism. In addition, catalyzes an electroneutral exchange of ornithine or lysine for H(+), a reaction driven by the pH gradient across the inner membrane. This chain is Mitochondrial ornithine transporter 1 (Slc25a15), found in Rattus norvegicus (Rat).